The following is a 196-amino-acid chain: DnaA initiator-associating protein DiaA (196 aa).

The SIS domain occupies 34–196 (LVQSLLNGNK…DNTLFPHQND (163 aa)).

The protein belongs to the SIS family. DiaA subfamily. Homotetramer; dimer of dimers.

Functionally, required for the timely initiation of chromosomal replication via direct interactions with the DnaA initiator protein. The protein is DnaA initiator-associating protein DiaA of Yersinia pestis bv. Antiqua (strain Antiqua).